Consider the following 69-residue polypeptide: Small ribosomal subunit protein bS21 (69 aa).

The protein belongs to the bacterial ribosomal protein bS21 family.

The protein is Small ribosomal subunit protein bS21 of Hyphomonas neptunium (strain ATCC 15444).